A 250-amino-acid polypeptide reads, in one-letter code: Indole-3-glycerol phosphate synthase (250 aa).

It belongs to the TrpC family.

It carries out the reaction 1-(2-carboxyphenylamino)-1-deoxy-D-ribulose 5-phosphate + H(+) = (1S,2R)-1-C-(indol-3-yl)glycerol 3-phosphate + CO2 + H2O. It participates in amino-acid biosynthesis; L-tryptophan biosynthesis; L-tryptophan from chorismate: step 4/5. This chain is Indole-3-glycerol phosphate synthase, found in Bacillus pumilus (strain SAFR-032).